The sequence spans 49 residues: Large ribosomal subunit protein bL33A (49 aa).

The protein belongs to the bacterial ribosomal protein bL33 family.

This is Large ribosomal subunit protein bL33A from Mycoplasmopsis agalactiae (strain NCTC 10123 / CIP 59.7 / PG2) (Mycoplasma agalactiae).